The sequence spans 241 residues: Ribosomal RNA small subunit methyltransferase G (241 aa).

S-adenosyl-L-methionine-binding positions include Gly-79, Phe-84, 130–131 (AE), and Arg-150.

The protein belongs to the methyltransferase superfamily. RNA methyltransferase RsmG family.

It localises to the cytoplasm. Specifically methylates the N7 position of a guanine in 16S rRNA. The protein is Ribosomal RNA small subunit methyltransferase G of Limosilactobacillus reuteri (strain DSM 20016) (Lactobacillus reuteri).